The chain runs to 304 residues: Large ribosomal subunit protein uL18y (304 aa).

It belongs to the universal ribosomal protein uL18 family. In terms of assembly, component of the large ribosomal subunit (LSU).

It is found in the cytoplasm. It localises to the nucleus. Component of the ribosome, a large ribonucleoprotein complex responsible for the synthesis of proteins in the cell. The small ribosomal subunit (SSU) binds messenger RNAs (mRNAs) and translates the encoded message by selecting cognate aminoacyl-transfer RNA (tRNA) molecules. The large subunit (LSU) contains the ribosomal catalytic site termed the peptidyl transferase center (PTC), which catalyzes the formation of peptide bonds, thereby polymerizing the amino acids delivered by tRNAs into a polypeptide chain. The nascent polypeptides leave the ribosome through a tunnel in the LSU and interact with protein factors that function in enzymatic processing, targeting, and the membrane insertion of nascent chains at the exit of the ribosomal tunnel. The chain is Large ribosomal subunit protein uL18y (RPL5B) from Oryza sativa subsp. japonica (Rice).